A 536-amino-acid chain; its full sequence is MTSFLLFNPGSLQQQQQPHSFSKDFINNNNNNNNNCQSSFSTPLGGSNGINNPNATTNNTTTTTTTTTTTTNPLSGSTGINNSNIEVIDIDQCLKHCGCRNPKELIQLIRSDAIENVEISWPDDMGLWYMNTIKSHEVSLQNLVEGVRVAGQLLLLDPTSARFDLSKKQKTIVVRSVNIDRSSSSLSSEDDDCCYETEEDDNGEDGEVVRSPQSKFSLLLDESEKFRKSFSLKKSSRSAFKKNKKDYHHGSSAGGGGSSGGVVVLHYDNNGNQLHYSNSMTDNNSRHHQHGGVGDGYPHSPPAAGGKSLGKRGYQQWSNSNNNNNNNNNNNNNNNGASGFVQSDEDLDASWLEEIKRNRAEVVPDLSSPALFSMDKRSPSPTLGSSCGSSSPGLNNSGNEMNNSQDSPLGVSGGNGNSLNISSGIQCPPGANIDSAEKAILEGQIHLPPLLRPRQYHACKTSKENRPTKRRKNHTSLFCRHCGTTDTPEWRRGPDGRKSLCNACGLHYSKLVKRENMAVPELSRTFELSEILNPSD.

Polar residues-rich tracts occupy residues 1–20 (MTSFLLFNPGSLQQQQQPHS) and 36–55 (CQSSFSTPLGGSNGINNPNA). Disordered regions lie at residues 1 to 77 (MTSF…LSGS), 183 to 211 (SSSLSSEDDDCCYETEEDDNGEDGEVVRS), 237 to 258 (RSAFKKNKKDYHHGSSAGGGGS), 273 to 342 (QLHY…GFVQ), and 370 to 423 (ALFS…NISS). Over residues 56 to 72 (TTNNTTTTTTTTTTTTN) the composition is skewed to low complexity. Over residues 188–206 (SEDDDCCYETEEDDNGEDG) the composition is skewed to acidic residues. Residues 237–247 (RSAFKKNKKDY) are compositionally biased toward basic residues. Residues 273 to 283 (QLHYSNSMTDN) are compositionally biased toward polar residues. Low complexity-rich tracts occupy residues 318-335 (SNSNNNNNNNNNNNNNNN) and 379-399 (PSPTLGSSCGSSSPGLNNSGN). The GATA-type zinc finger occupies 479-504 (CRHCGTTDTPEWRRGPDGRKSLCNAC).

This chain is GATA zinc finger domain-containing protein 9 (gtaI), found in Dictyostelium discoideum (Social amoeba).